Here is a 224-residue protein sequence, read N- to C-terminus: uncharacterized protein (224 aa).

Helical transmembrane passes span 32–52 (ILTL…PLVV), 60–80 (LFTN…IYFF), 100–120 (IIYL…SGLG), 130–150 (AIAY…LFGF), and 162–182 (LGFS…FGII).

This sequence belongs to the derlin family.

The protein resides in the endoplasmic reticulum membrane. This is an uncharacterized protein from Schizosaccharomyces pombe (strain 972 / ATCC 24843) (Fission yeast).